Reading from the N-terminus, the 392-residue chain is Phosphoglycerate kinase (392 aa).

Residues 21 to 23 (DFN), Arg36, 59 to 62 (HLGR), Arg113, and Arg146 each bind substrate. ATP contacts are provided by residues Lys197, Glu319, and 345 to 348 (GGDT).

Belongs to the phosphoglycerate kinase family. In terms of assembly, monomer.

It localises to the cytoplasm. The catalysed reaction is (2R)-3-phosphoglycerate + ATP = (2R)-3-phospho-glyceroyl phosphate + ADP. It functions in the pathway carbohydrate degradation; glycolysis; pyruvate from D-glyceraldehyde 3-phosphate: step 2/5. This chain is Phosphoglycerate kinase, found in Francisella tularensis subsp. novicida (strain U112).